The chain runs to 137 residues: Putative pre-16S rRNA nuclease (137 aa).

It belongs to the YqgF nuclease family.

The protein localises to the cytoplasm. Could be a nuclease involved in processing of the 5'-end of pre-16S rRNA. This Bacillus cereus (strain G9842) protein is Putative pre-16S rRNA nuclease.